The sequence spans 77 residues: Protein OPG195 (77 aa).

An N-terminal signal peptide occupies residues 1 to 17 (MRSLIIVLLFPSIIYSM).

It belongs to the chordopoxvirinae B9 protein family.

The polypeptide is Protein OPG195 (OPG197) (Homo sapiens (Human)).